Here is a 524-residue protein sequence, read N- to C-terminus: Leukotriene-B4 omega-hydroxylase 3 (524 aa).

Positions 328 and 468 each coordinate heme.

Belongs to the cytochrome P450 family. It depends on heme as a cofactor.

The protein localises to the endoplasmic reticulum membrane. It localises to the microsome membrane. The catalysed reaction is leukotriene B4 + reduced [NADPH--hemoprotein reductase] + O2 = 20-hydroxy-leukotriene B4 + oxidized [NADPH--hemoprotein reductase] + H2O + H(+). It functions in the pathway lipid metabolism; leukotriene B4 degradation. In terms of biological role, cytochromes P450 are a group of heme-thiolate monooxygenases. Catalyzes the omega-hydroxylation of LTB4. This Mus musculus (Mouse) protein is Leukotriene-B4 omega-hydroxylase 3 (Cyp4f14).